The primary structure comprises 164 residues: Phosphohistidine phosphatase SixA homolog (164 aa).

The protein belongs to the SixA phosphatase family.

This chain is Phosphohistidine phosphatase SixA homolog (sixA-A), found in Haemophilus influenzae (strain ATCC 51907 / DSM 11121 / KW20 / Rd).